Consider the following 302-residue polypeptide: Glutaminase (302 aa).

Residues Ser-61, Asn-111, Glu-155, Asn-162, Tyr-186, Tyr-238, and Val-256 each contribute to the substrate site.

Belongs to the glutaminase family. In terms of assembly, homotetramer.

It carries out the reaction L-glutamine + H2O = L-glutamate + NH4(+). This Pseudomonas syringae pv. tomato (strain ATCC BAA-871 / DC3000) protein is Glutaminase.